The chain runs to 796 residues: N-terminal acetyltransferase B complex subunit MDM20 (796 aa).

An N-acetylserine modification is found at Ser2.

Belongs to the MDM20/NAA25 family. As to quaternary structure, component of the N-terminal acetyltransferase B (NatB) complex, which is composed of NAT3 and MDM20.

It localises to the cytoplasm. Non-catalytic subunit of the NatB N-terminal acetyltransferase, which catalyzes acetylation of the amino-terminal methionine residues of all proteins beginning with Met-Asp or Met-Glu and of some proteins beginning with Met-Asn or Met-Met. NatB acetylates TPM1 protein and regulates tropomyocin-actin interactions. MDM20 is required for mitochondrial inheritance during budding and together with TPM1, is essential for the integrity and assembly of actin cables. Genetically interacts with CIN8. The sequence is that of N-terminal acetyltransferase B complex subunit MDM20 (MDM20) from Saccharomyces cerevisiae (strain ATCC 204508 / S288c) (Baker's yeast).